A 260-amino-acid polypeptide reads, in one-letter code: Indole-3-glycerol phosphate synthase (260 aa).

The protein belongs to the TrpC family.

It carries out the reaction 1-(2-carboxyphenylamino)-1-deoxy-D-ribulose 5-phosphate + H(+) = (1S,2R)-1-C-(indol-3-yl)glycerol 3-phosphate + CO2 + H2O. Its pathway is amino-acid biosynthesis; L-tryptophan biosynthesis; L-tryptophan from chorismate: step 4/5. The protein is Indole-3-glycerol phosphate synthase of Staphylococcus haemolyticus (strain JCSC1435).